The sequence spans 359 residues: Very-long-chain (3R)-3-hydroxyacyl-CoA dehydratase (359 aa).

At 1 to 144 the chain is on the cytoplasmic side; that stretch reads MSALTPHVYW…RKDPFLGLKK (144 aa). The 90-residue stretch at 3 to 92 folds into the CS domain; the sequence is ALTPHVYWAQ…QEEVWWNRLT (90 aa). Residues 109–133 adopt a coiled-coil conformation; sequence LDESDAEMELREKEEKINKVSFESR. A helical membrane pass occupies residues 145 to 165; sequence GFLFMYNLVQFLGYSWIFVNM. The Lumenal segment spans residues 166 to 186; sequence TVRLFILGQDSFYDTFHTIAD. The helical transmembrane segment at 187-207 threads the bilayer; sequence VMYFCQMLAIMEVINPAVGLV. Topologically, residues 208–209 are cytoplasmic; that stretch reads KT. The chain crosses the membrane as a helical span at residues 210-230; that stretch reads GVMPAFIQVMGRNFILFVIFG. The Lumenal segment spans residues 231-239; sequence SLEDMQNKP. The helical transmembrane segment at 240–260 threads the bilayer; sequence VVFFVFYLWSTIEIFRYPFYM. Topologically, residues 261-277 are cytoplasmic; it reads LACIDTEWKLLTWLRYT. Residues 278 to 298 traverse the membrane as a helical segment; it reads IWMPLYPLGVLAEAVAVIQSI. Active-site residues include Tyr283 and Glu290. Residues 299–317 are Lumenal-facing; the sequence is PIFDETKLLSIPLPKATGL. A helical transmembrane segment spans residues 318–338; sequence SLSFSYILQLYLVVMFLGLFI. Topologically, residues 339–359 are cytoplasmic; the sequence is NFRHLFKQRTRRFRTKKRKAN.

Belongs to the very long-chain fatty acids dehydratase HACD family.

It localises to the endoplasmic reticulum membrane. The enzyme catalyses a very-long-chain (3R)-3-hydroxyacyl-CoA = a very-long-chain (2E)-enoyl-CoA + H2O. It carries out the reaction (3R)-hydroxyhexadecanoyl-CoA = (2E)-hexadecenoyl-CoA + H2O. The protein operates within lipid metabolism; fatty acid biosynthesis. Its function is as follows. Catalyzes the third of the four reactions of the long-chain fatty acids elongation cycle. This endoplasmic reticulum-bound enzymatic process, allows the addition of two carbons to the chain of long- and very long-chain fatty acids/VLCFAs per cycle. This enzyme catalyzes the dehydration of the 3-hydroxyacyl-CoA intermediate into trans-2,3-enoyl-CoA, within each cycle of fatty acid elongation. Thereby, it participates in the production of VLCFAs of different chain lengths that are involved in multiple biological processes as precursors of membrane lipids and lipid mediators. Involved in Rac1-signaling pathways leading to the modulation of gene expression. The chain is Very-long-chain (3R)-3-hydroxyacyl-CoA dehydratase from Danio rerio (Zebrafish).